Here is a 95-residue protein sequence, read N- to C-terminus: Aspartyl/glutamyl-tRNA(Asn/Gln) amidotransferase subunit C (95 aa).

The protein belongs to the GatC family. In terms of assembly, heterotrimer of A, B and C subunits.

It catalyses the reaction L-glutamyl-tRNA(Gln) + L-glutamine + ATP + H2O = L-glutaminyl-tRNA(Gln) + L-glutamate + ADP + phosphate + H(+). It carries out the reaction L-aspartyl-tRNA(Asn) + L-glutamine + ATP + H2O = L-asparaginyl-tRNA(Asn) + L-glutamate + ADP + phosphate + 2 H(+). In terms of biological role, allows the formation of correctly charged Asn-tRNA(Asn) or Gln-tRNA(Gln) through the transamidation of misacylated Asp-tRNA(Asn) or Glu-tRNA(Gln) in organisms which lack either or both of asparaginyl-tRNA or glutaminyl-tRNA synthetases. The reaction takes place in the presence of glutamine and ATP through an activated phospho-Asp-tRNA(Asn) or phospho-Glu-tRNA(Gln). This Bartonella bacilliformis (strain ATCC 35685 / KC583 / Herrer 020/F12,63) protein is Aspartyl/glutamyl-tRNA(Asn/Gln) amidotransferase subunit C.